A 366-amino-acid chain; its full sequence is Photosynthetic reaction center cytochrome c subunit (366 aa).

A signal peptide spans 1 to 22 (MALAVRISTLTVAVTAAALLAG). Cysteine 23 is lipidated: N-palmitoyl cysteine. Residue cysteine 23 is the site of S-diacylglycerol cysteine attachment. The heme site is built by methionine 94, cysteine 107, cysteine 110, histidine 111, methionine 129, histidine 143, cysteine 151, cysteine 154, histidine 155, methionine 238, cysteine 249, cysteine 252, histidine 253, cysteine 309, cysteine 312, and histidine 313.

In terms of assembly, component of the photosynthetic reaction center composed of protein subunits L (PufL), M (PufM), H (PuhA) and cytochrome C (PufC). The reaction center interacts with light-harvesting antenna complex LH1. Binds 4 heme groups per subunit.

The protein resides in the cellular chromatophore membrane. Functionally, the reaction center of purple bacteria contains a tightly bound cytochrome molecule which re-reduces the photo oxidized primary electron donor. The sequence is that of Photosynthetic reaction center cytochrome c subunit (pufC) from Rubrivivax gelatinosus (strain NBRC 100245 / IL144).